A 376-amino-acid chain; its full sequence is Nucleoside diphosphate kinase homolog 7 (376 aa).

The DM10 domain occupies 3–91 (HSERFVFIAE…YTARQLGSRK (89 aa)).

The protein belongs to the NDK family. Component of sperm flagellar doublet microtubules. Component of the gamma-tubulin ring complex. In terms of processing, undergoes autophosphorylation. Expressed in airway epithelial cells.

Its subcellular location is the cytoplasm. It localises to the cytoskeleton. It is found in the microtubule organizing center. The protein localises to the centrosome. The protein resides in the nucleus. Its subcellular location is the spindle. It localises to the cilium axoneme. It is found in the flagellum axoneme. The protein localises to the cell projection. The protein resides in the cilium. Its function is as follows. Possesses an intrinsic kinase activity. Displays 3'-5' exonuclease activity with a preference for single-stranded DNA. Does not seem to have nucleoside diphosphate kinase activity. Functional component of the gamma-tubulin ring complex, implicated in the regulation of the microtubule-nucleating activity of the gamma-tubulin ring complex in centrosomes, in a kinase activity-dependent manner. Part of the dynein-decorated doublet microtubules (DMTs) in cilia axoneme, which is required for motile cilia beating. The chain is Nucleoside diphosphate kinase homolog 7 from Homo sapiens (Human).